The primary structure comprises 337 residues: RNA 3'-terminal phosphate cyclase (337 aa).

ATP is bound by residues glutamine 101 and 282–285 (HMSD). The active-site Tele-AMP-histidine intermediate is histidine 306.

Belongs to the RNA 3'-terminal cyclase family. Type 1 subfamily.

The protein localises to the cytoplasm. It catalyses the reaction a 3'-end 3'-phospho-ribonucleotide-RNA + ATP = a 3'-end 2',3'-cyclophospho-ribonucleotide-RNA + AMP + diphosphate. Catalyzes the conversion of 3'-phosphate to a 2',3'-cyclic phosphodiester at the end of RNA. The mechanism of action of the enzyme occurs in 3 steps: (A) adenylation of the enzyme by ATP; (B) transfer of adenylate to an RNA-N3'P to produce RNA-N3'PP5'A; (C) and attack of the adjacent 2'-hydroxyl on the 3'-phosphorus in the diester linkage to produce the cyclic end product. The biological role of this enzyme is unknown but it is likely to function in some aspects of cellular RNA processing. The chain is RNA 3'-terminal phosphate cyclase from Saccharolobus islandicus (strain M.16.4 / Kamchatka #3) (Sulfolobus islandicus).